The sequence spans 121 residues: uncharacterized protein (121 aa).

Helical transmembrane passes span 16–36 (GFMV…GFAV) and 74–94 (LYIA…MKTI).

It is found in the cell membrane. This is an uncharacterized protein from Bacillus subtilis (strain 168).